Consider the following 302-residue polypeptide: MLEELNAKDKYSFNKLQKRLRRNVGQAIADFNMIEEGDKIMVCLSGGKDSFAMLDILMSLKASAPIHFDLVAVNLDQKQPGFPEHVLPEYLATLGVDFKIVEEDTYSIVKDKVPEGKTTCALCSRLRRGILYRTAQELGCTKIALGHHRDDILETLFLNMFYGGKLKSMPPKLVSDDGKNVVIRPLAYCKEKDLVRYAEVKAFPIIPCNLCGSQENLQRQAIKQMMQDWDRRFPGRIETMFTAIQDVIPSHLLDHKLFDFKSINRDSGIIDGGDKAFDPPELPTAPLLNIDEMDVLDVIEVR.

A PP-loop motif motif is present at residues 45 to 50; that stretch reads SGGKDS. 3 residues coordinate [4Fe-4S] cluster: Cys120, Cys123, and Cys211.

This sequence belongs to the TtcA family. In terms of assembly, homodimer. Mg(2+) serves as cofactor. The cofactor is [4Fe-4S] cluster.

Its subcellular location is the cytoplasm. The enzyme catalyses cytidine(32) in tRNA + S-sulfanyl-L-cysteinyl-[cysteine desulfurase] + AH2 + ATP = 2-thiocytidine(32) in tRNA + L-cysteinyl-[cysteine desulfurase] + A + AMP + diphosphate + H(+). Its pathway is tRNA modification. Functionally, catalyzes the ATP-dependent 2-thiolation of cytidine in position 32 of tRNA, to form 2-thiocytidine (s(2)C32). The sulfur atoms are provided by the cysteine/cysteine desulfurase (IscS) system. The protein is tRNA-cytidine(32) 2-sulfurtransferase of Aeromonas salmonicida (strain A449).